Consider the following 509-residue polypeptide: H/ACA ribonucleoprotein complex subunit DKC1 (509 aa).

A disordered region spans residues M1–E24. N-acetylalanine is present on A2. Residues A2–P21 are nucleolar localization. A compositionally biased stretch (basic residues) spans P10–R19. Residues K20, K39, and K43 each participate in a glycyl lysine isopeptide (Lys-Gly) (interchain with G-Cter in SUMO2) cross-link. The active-site Nucleophile is D125. K191 participates in a covalent cross-link: Glycyl lysine isopeptide (Lys-Gly) (interchain with G-Cter in SUMO2). A PUA domain is found at K297–E372. S387 is modified (phosphoserine). K394 is covalently cross-linked (Glycyl lysine isopeptide (Lys-Gly) (interchain with G-Cter in SUMO2)). Residue K413 forms a Glycyl lysine isopeptide (Lys-Gly) (interchain with G-Cter in SUMO1); alternate linkage. K413 participates in a covalent cross-link: Glycyl lysine isopeptide (Lys-Gly) (interchain with G-Cter in SUMO2); alternate. K424 is covalently cross-linked (Glycyl lysine isopeptide (Lys-Gly) (interchain with G-Cter in SUMO2)). The nuclear and nucleolar localization stretch occupies residues K446–E509. A disordered region spans residues R447–E509. Phosphoserine occurs at positions 451, 453, and 455. Phosphothreonine is present on T458. Residues E466–K476 are compositionally biased toward basic residues. Phosphoserine is present on S481. Position 485 is a phosphothreonine (T485). S508 is modified (phosphoserine).

The protein belongs to the pseudouridine synthase TruB family. Part of the H/ACA small nucleolar ribonucleoprotein (H/ACA snoRNP) complex, which contains NHP2/NOLA2, GAR1/NOLA1, NOP10/NOLA3, and DKC1/NOLA4, which is presumed to be the catalytic subunit. The complex contains a stable core formed by binding of one or two NOP10-DKC1 heterodimers to NHP2; GAR1 subsequently binds to this core via DKC1. The complex binds a box H/ACA small nucleolar RNA (snoRNA), which may target the specific site of modification within the RNA substrate. During assembly, the complex contains NAF1 instead of GAR1/NOLA1. The complex also interacts with TERC, which contains a 3'-terminal domain related to the box H/ACA snoRNAs. Specific interactions with snoRNAs or TERC are mediated by GAR1 and NHP2. Associates with NOLC1/NOPP140. H/ACA snoRNPs interact with the SMN complex, consisting of SMN1 or SMN2, GEMIN2/SIP1, DDX20/GEMIN3, and GEMIN4. This is mediated by interaction between GAR1 and SMN1 or SMN2. The SMN complex may be required for correct assembly of the H/ACA snoRNP complex. Component of the telomerase holoenzyme complex composed of one molecule of TERT, one molecule of WRAP53/TCAB1, two molecules of H/ACA ribonucleoprotein complex subunits DKC1, NOP10, NHP2 and GAR1, and a telomerase RNA template component (TERC). The telomerase holoenzyme complex is associated with TEP1, SMG6/EST1A and POT1. Interacts with SHQ1; this interaction may lead to the stabilization of DKC1, from the time of its synthesis until its association with NOP10, NHP2, and NAF1 at the nascent H/ACA RNA. Interacts with HMBOX1. Interacts with DHX36. In terms of tissue distribution, ubiquitously expressed, with elevated levels in Purkinje cells, the olfactory bulb, and Leydig cells of the testis.

The protein localises to the nucleus. It localises to the nucleolus. Its subcellular location is the cajal body. It catalyses the reaction uridine in 5S rRNA = pseudouridine in 5S rRNA. Functionally, catalytic subunit of H/ACA small nucleolar ribonucleoprotein (H/ACA snoRNP) complex, which catalyzes pseudouridylation of rRNA. This involves the isomerization of uridine such that the ribose is subsequently attached to C5, instead of the normal N1. Each rRNA can contain up to 100 pseudouridine ('psi') residues, which may serve to stabilize the conformation of rRNAs. Required for ribosome biogenesis and telomere maintenance. Also required for correct processing or intranuclear trafficking of TERC, the RNA component of the telomerase reverse transcriptase (TERT) holoenzyme. This chain is H/ACA ribonucleoprotein complex subunit DKC1 (Dkc1), found in Mus musculus (Mouse).